The primary structure comprises 812 residues: Valine--tRNA ligase (812 aa).

The short motif at 47–57 (PTISGQLHIGH) is the 'HIGH' region element. A 'KMSKS' region motif is present at residues 536–540 (KMSKS). Lys-539 lines the ATP pocket.

This sequence belongs to the class-I aminoacyl-tRNA synthetase family. ValS type 2 subfamily. In terms of assembly, monomer.

Its subcellular location is the cytoplasm. It catalyses the reaction tRNA(Val) + L-valine + ATP = L-valyl-tRNA(Val) + AMP + diphosphate. Catalyzes the attachment of valine to tRNA(Val). As ValRS can inadvertently accommodate and process structurally similar amino acids such as threonine, to avoid such errors, it has a 'posttransfer' editing activity that hydrolyzes mischarged Thr-tRNA(Val) in a tRNA-dependent manner. The chain is Valine--tRNA ligase from Ehrlichia ruminantium (strain Gardel).